A 63-amino-acid chain; its full sequence is AIGPVADIDIDVVSLGMVDQSLLREMHEVSNVALQAMKGSDEYDFNANLRLVLWNQPDFMWLR.

This sequence belongs to the multicopper oxidase family. Monomer. Cu cation serves as cofactor. Glycosylated; contains 16% carbohydrates.

Its subcellular location is the secreted. It catalyses the reaction 4 hydroquinone + O2 = 4 benzosemiquinone + 2 H2O. Its activity is regulated as follows. Inhibited by sodium azide. In terms of biological role, lignin degradation and detoxification of lignin-derived products. Oxidation of a broad range of substrates including mono-, di- and polyphenols, aromatic amines and methoxy-substituted phenols accompanied by reduction of oxygen to water. This is Laccase-C1 from Cerrena unicolor (Canker rot fungus).